The following is a 389-amino-acid chain: Na(+)/H(+) antiporter NhaA 1 (389 aa).

A run of 11 helical transmembrane segments spans residues 14-34 (AGGILLVIAAAIAMVIANSPL), 47-67 (FGMSVSHWINDGLMAIFFLLI), 87-107 (IFPAIAAVGGMLAPALIYVAF), 117-137 (GWAIPAATDIAFALGIMALLG), 146-166 (VFLLALAIIDDLGVVVIIALF), 171-191 (LSTLALTVGFAMTGVLFMLNA), 197-217 (LIWYIVVGFILWVAVLKSGVH), 252-272 (VAFAILPVFAFANAGISLEGV), 280-300 (MLPLGIALGLLVGKPLGIFTF), 321-341 (IFAVSVLCGIGFTMSIFISSL), and 356-376 (LGILMGSTTAAVLGYFLLHVS).

It belongs to the NhaA Na(+)/H(+) (TC 2.A.33) antiporter family.

It is found in the cell inner membrane. It carries out the reaction Na(+)(in) + 2 H(+)(out) = Na(+)(out) + 2 H(+)(in). Its function is as follows. Na(+)/H(+) antiporter that extrudes sodium in exchange for external protons. The sequence is that of Na(+)/H(+) antiporter NhaA 1 from Vibrio vulnificus (strain CMCP6).